The primary structure comprises 27 residues: Nemertide alpha-8 (27 aa).

Intrachain disulfides connect C2-C16, C9-C20, and C15-C26.

The protein belongs to the nemertide family. Confined to the epidermis and to the mucus layer.

It localises to the secreted. Highly potent toxin against both insect and some mammalian sodium channels (Nav). It potently inhibits inactivation of insect sodium channels of B.germanica (BgNav1) and also delays the inactivation of mammalian Nav with potent activity on Nav1.3/SCN3A and Nav1.4/SCN4A. 1 uM is enough to completely inhibits the inactivation, resulting in sustained non-inactivating currents. In addition, the toxin significantly enhances the recovery from inactivation, and the open state is not required for the toxin to interact with the channel. In vivo, injection into brine shrimp (Artemia salina) stops movement or causes death after 24 hours (EC(50)=0.4 uM). The sequence is that of Nemertide alpha-8 from Riseriellus occultus (Ribbon worm).